Consider the following 591-residue polypeptide: NADH-quinone oxidoreductase subunit C/D (591 aa).

The tract at residues methionine 1–glutamine 182 is NADH dehydrogenase I subunit C. The NADH dehydrogenase I subunit D stretch occupies residues aspartate 206 to arginine 591.

This sequence in the N-terminal section; belongs to the complex I 30 kDa subunit family. The protein in the C-terminal section; belongs to the complex I 49 kDa subunit family. In terms of assembly, NDH-1 is composed of 13 different subunits. Subunits NuoB, CD, E, F, and G constitute the peripheral sector of the complex.

Its subcellular location is the cell inner membrane. The catalysed reaction is a quinone + NADH + 5 H(+)(in) = a quinol + NAD(+) + 4 H(+)(out). Functionally, NDH-1 shuttles electrons from NADH, via FMN and iron-sulfur (Fe-S) centers, to quinones in the respiratory chain. The immediate electron acceptor for the enzyme in this species is believed to be ubiquinone. Couples the redox reaction to proton translocation (for every two electrons transferred, four hydrogen ions are translocated across the cytoplasmic membrane), and thus conserves the redox energy in a proton gradient. The sequence is that of NADH-quinone oxidoreductase subunit C/D from Psychrobacter arcticus (strain DSM 17307 / VKM B-2377 / 273-4).